The sequence spans 100 residues: MGSRFLLALFLILLVLGCEVQAAQQLQQDDPGSSALLDKVQESISSYWDTAKAAAQDLYQKTYLTSVDEKLRDMYSKSSAAMTTYASIFTDQILTLLKGE.

Positions 1 to 22 are cleaved as a signal peptide; sequence MGSRFLLALFLILLVLGCEVQA. The tract at residues 66–74 is lipid binding; the sequence is SVDEKLRDM. Residues 78–100 form a lipoprotein lipase cofactor region; the sequence is SSAAMTTYASIFTDQILTLLKGE.

Belongs to the apolipoprotein C2 family. In terms of processing, proapolipoprotein C-II is synthesized as a sialic acid containing glycoprotein which is subsequently desialylated prior to its proteolytic processing. Post-translationally, proapolipoprotein C-II, the major form found in plasma undergoes proteolytic cleavage of its N-terminal hexapeptide to generate the mature form apolipoprotein C-II, which occurs as the minor form in plasma.

It is found in the secreted. Component of chylomicrons, very low-density lipoproteins (VLDL), low-density lipoproteins (LDL), and high-density lipoproteins (HDL) in plasma. Plays an important role in lipoprotein metabolism as an activator of lipoprotein lipase. The protein is Apolipoprotein C-II (APOC2) of Microtus ochrogaster (Prairie vole).